The following is a 315-amino-acid chain: tRNA pseudouridine synthase B (315 aa).

Aspartate 54 functions as the Nucleophile in the catalytic mechanism.

It belongs to the pseudouridine synthase TruB family. Type 1 subfamily.

It catalyses the reaction uridine(55) in tRNA = pseudouridine(55) in tRNA. Responsible for synthesis of pseudouridine from uracil-55 in the psi GC loop of transfer RNAs. The polypeptide is tRNA pseudouridine synthase B (Cupriavidus pinatubonensis (strain JMP 134 / LMG 1197) (Cupriavidus necator (strain JMP 134))).